A 278-amino-acid polypeptide reads, in one-letter code: HTH-type transcriptional regulator HdfR (278 aa).

The 58-residue stretch at 1 to 58 (MDTELLKTFLEVSRTRHFGRAAEALYLTQSAVSFRIRQLENQLGVNLFTRHRNNIRLT) folds into the HTH lysR-type domain. Positions 18 to 37 (FGRAAEALYLTQSAVSFRIR) form a DNA-binding region, H-T-H motif.

Belongs to the LysR transcriptional regulatory family.

Functionally, negatively regulates the transcription of the flagellar master operon flhDC by binding to the upstream region of the operon. The sequence is that of HTH-type transcriptional regulator HdfR from Salmonella dublin (strain CT_02021853).